The primary structure comprises 107 residues: U1-lycotoxin-Ls1b (107 aa).

The first 20 residues, Met1–Ser20, serve as a signal peptide directing secretion. The propeptide occupies Glu21–Arg41. 4 disulfide bridges follow: Cys44/Cys59, Cys51/Cys68, Cys58/Cys86, and Cys70/Cys84.

The protein belongs to the neurotoxin 19 (CSTX) family. 04 (U1-Lctx) subfamily. In terms of tissue distribution, expressed by the venom gland.

It is found in the secreted. This chain is U1-lycotoxin-Ls1b, found in Lycosa singoriensis (Wolf spider).